A 271-amino-acid chain; its full sequence is RxLR effector protein PITG_15679 (271 aa).

The signal sequence occupies residues 1–18; sequence MKVLQLIALTALVSSCVA. A RxLR-dEER motif is present at residues 49-69; that stretch reads RSLRRYDLEGLDSVNSNREER. The Nudix hydrolase domain maps to 212 to 271; the sequence is RLLSANVVMRLNDKGEKQILLISSSNPKKGDFLLPKGGWDKGEDVKKAALREVIEEGGVR. The short motif at 248-269 is the Nudix box element; the sequence is GGWDKGEDVKKAALREVIEEGG.

The protein in the N-terminal section; belongs to the RxLR effector family. In the C-terminal section; belongs to the Nudix hydrolase family.

The protein resides in the secreted. It localises to the host cytoplasm. Its subcellular location is the host nucleus. Effector that enhances P.infestans colonization of Nicotiana benthamiana leaves. This chain is RxLR effector protein PITG_15679, found in Phytophthora infestans (strain T30-4) (Potato late blight agent).